The sequence spans 307 residues: Transcription factor DIVARICATA (307 aa).

Residues 21-74 (RSTTRWTAAENKAFENALAVFDENTPNRWERVAERVPGKTVGDVMRQYKELEDD) enclose the SANT domain. The interval 109 to 133 (QSYGTGGRKSSSGRPSEQERKKGVP) is disordered. A compositionally biased stretch (basic and acidic residues) spans 124-133 (SEQERKKGVP). Positions 126-182 (QERKKGVPWTEEEHKLFLMGLKKYGKGDWRNISRNFVITRTPTQVASHAQKYFIRQL) constitute an HTH myb-type domain. Residues 154 to 178 (WRNISRNFVITRTPTQVASHAQKYF) constitute a DNA-binding region (H-T-H motif). Composition is skewed to polar residues over residues 196 to 206 (ITTVNLSDNQT) and 222 to 231 (MAQQQTSSTS). A disordered region spans residues 196–231 (ITTVNLSDNQTPSPDNKKPPSSPDHSMAQQQTSSTS).

It is found in the nucleus. Functionally, involved in the dorsovental asymmetry of flowers. Promotes ventral identity. This chain is Transcription factor DIVARICATA (DIVARICATA), found in Antirrhinum majus (Garden snapdragon).